Consider the following 293-residue polypeptide: 3-methyl-2-oxobutanoate hydroxymethyltransferase (293 aa).

Positions 1–29 (MTAAHDRSENQPGRPGGETTAPYGSAPRR) are disordered. Asp-73 and Asp-112 together coordinate Mg(2+). 3-methyl-2-oxobutanoate is bound by residues 73-74 (DS), Asp-112, and Lys-142. Glu-144 serves as a coordination point for Mg(2+). Catalysis depends on Glu-210, which acts as the Proton acceptor.

This sequence belongs to the PanB family. In terms of assembly, homodecamer; pentamer of dimers. Requires Mg(2+) as cofactor.

The protein localises to the cytoplasm. The catalysed reaction is 3-methyl-2-oxobutanoate + (6R)-5,10-methylene-5,6,7,8-tetrahydrofolate + H2O = 2-dehydropantoate + (6S)-5,6,7,8-tetrahydrofolate. The protein operates within cofactor biosynthesis; (R)-pantothenate biosynthesis; (R)-pantoate from 3-methyl-2-oxobutanoate: step 1/2. In terms of biological role, catalyzes the reversible reaction in which hydroxymethyl group from 5,10-methylenetetrahydrofolate is transferred onto alpha-ketoisovalerate to form ketopantoate. The chain is 3-methyl-2-oxobutanoate hydroxymethyltransferase from Saccharopolyspora erythraea (strain ATCC 11635 / DSM 40517 / JCM 4748 / NBRC 13426 / NCIMB 8594 / NRRL 2338).